Consider the following 378-residue polypeptide: Envelope glycoprotein M (378 aa).

The Intravirion portion of the chain corresponds to 1–16; that stretch reads MKSSKSDLFIYKTWFK. The helical transmembrane segment at 17-37 threads the bilayer; that stretch reads LLVLYFVMFVLSATVPIAASF. The Virion surface portion of the chain corresponds to 38–84; that stretch reads PGLGFPCYYNALVNYSAINLTERNVAKHLTPTLYLEEPEMFAYMTFT. Residues 85–105 form a helical membrane-spanning segment; the sequence is FLVDCFAAVYYFLGALAIMLA. Residues 106 to 118 lie on the Intravirion side of the membrane; it reads KRHFVVSLTTLSQ. A helical transmembrane segment spans residues 119–139; the sequence is WIAMVGTPTLILIGMWRMWTI. The Virion surface portion of the chain corresponds to 140-150; the sequence is QLFIQTLSYKH. The chain crosses the membrane as a helical span at residues 151–171; the sequence is IYLSAFVYLIHFLLSFLHTQC. Residues 172–210 are Intravirion-facing; that stretch reads YISRNSQLWSLKVLEQGIPPNTLLDTVVFTIKPLLANCQ. The chain crosses the membrane as a helical span at residues 211-231; sequence LFCLGLEMLVFSLSFMMAIGN. At 232–239 the chain is on the virion surface side; it reads SFYVLVSD. A helical transmembrane segment spans residues 240 to 260; sequence IVFGAINLYLALVLFWVLLTE. Residues 261–268 lie on the Intravirion side of the membrane; that stretch reads LYLVKYMT. The chain crosses the membrane as a helical span at residues 269–289; it reads FVMGFYLGGLIGCIFLLVPLW. Over 290–303 the chain is Virion surface; it reads RYEQIFVAANLRSP. Residues 304-324 form a helical membrane-spanning segment; the sequence is ILINILVIFFLCTLSALVRLL. Over 325 to 378 the chain is Intravirion; it reads RMTWFSPTKPSYEPIQLKNIKHRRVKLQSPSGPSILEEGSSDEGSEDSEEEEEL. Positions 347–378 are disordered; the sequence is RRVKLQSPSGPSILEEGSSDEGSEDSEEEEEL. The segment covering 363–378 has biased composition (acidic residues); the sequence is GSSDEGSEDSEEEEEL.

This sequence belongs to the herpesviridae glycoprotein M family. Interacts (via N-terminus) with gN (via N-terminus). The gM-gN heterodimer forms the gCII complex.

It localises to the virion membrane. It is found in the host Golgi apparatus. The protein localises to the host trans-Golgi network. The protein resides in the host endosome membrane. Its subcellular location is the host nucleus inner membrane. Its function is as follows. Envelope glycoprotein important for virion assembly and egress. Plays a role in the correct incorporation of gH-gL into virion membrane. Directs the glycoprotein N (gN) to the host trans-Golgi network. In Equus caballus (Horse), this protein is Envelope glycoprotein M.